Here is a 689-residue protein sequence, read N- to C-terminus: MTQSQRKILVTSALPYANGPIHLGHMLEYIQTDIWSRFQKMRGHECHYICADDAHGTPIMLKAQQLGIAPEAMIAQVQIEHEQDFADFNVAFDNFHSTHSEENRELASDIYIKLRDAGHIKTKTISQLYDPEKSMFLPDRFVKGTCPKCKSDDQYGDNCDSCGATYSTTDLINPRSAVSGATPVMKDTEHFFFDLPAFEGMLKEWIHSGSLQSEMANKLNEWFEQGLQQWDISRDAPYFGFEIPDAPGKYFYVWLDAPIGYMGSFKNFCAKRGDINFDDFWAKDSTAEVYHFIGKDIVYFHSLFWPAMLEGAGLRKPTSVYAHGYVTVNGAKMSKSKGTFIKARTYLDHLDPEYLRYYYAAKLSSRIDDLDLNLEDFAQRVNSDLVGKLVNLASRTAGFISKRFDGKLANVTDNSLAESFIAKQEVIAEFYEAREYGKAMREIMAMADIANGFVAEQAPWQLVKDDDKQAQAHEVCSIALNLFRILTTYLKPVLPRLSQDVEAFMQLELTWDNLAKDMTAHEIAPFKAMMQRVDLDKVAAMVDASKDNLQPTEAPKADKKADKKVEKKATTGDPLTDDPISDEISFEDFAKLDLRIALIAKAEHVADADKLLKLQLDLGGVTKQVFAGIKSAYAPEDLEGKLTVMVANLAPRKMRFGMSEGMVLAAGPGGDELWILEPHQGAKPGMRVK.

The 'HIGH' region motif lies at 15–25 (PYANGPIHLGH). C146, C149, C159, and C162 together coordinate Zn(2+). Residues 332–336 (KMSKS) carry the 'KMSKS' region motif. K335 serves as a coordination point for ATP. Positions 546-577 (KDNLQPTEAPKADKKADKKVEKKATTGDPLTD) are disordered. Basic and acidic residues predominate over residues 555–570 (PKADKKADKKVEKKAT). The 102-residue stretch at 588 to 689 (DFAKLDLRIA…QGAKPGMRVK (102 aa)) folds into the tRNA-binding domain.

The protein belongs to the class-I aminoacyl-tRNA synthetase family. MetG type 1 subfamily. Homodimer. The cofactor is Zn(2+).

The protein localises to the cytoplasm. It catalyses the reaction tRNA(Met) + L-methionine + ATP = L-methionyl-tRNA(Met) + AMP + diphosphate. Its function is as follows. Is required not only for elongation of protein synthesis but also for the initiation of all mRNA translation through initiator tRNA(fMet) aminoacylation. The sequence is that of Methionine--tRNA ligase from Shewanella denitrificans (strain OS217 / ATCC BAA-1090 / DSM 15013).